We begin with the raw amino-acid sequence, 662 residues long: Glycogen debranching enzyme (662 aa).

Catalysis depends on D338, which acts as the Nucleophile. E373 functions as the Proton donor in the catalytic mechanism.

This sequence belongs to the glycosyl hydrolase 13 family.

It carries out the reaction Hydrolysis of (1-&gt;6)-alpha-D-glucosidic linkages to branches with degrees of polymerization of three or four glucose residues in limit dextrin.. It functions in the pathway glycan degradation; glycogen degradation. Functionally, removes maltotriose and maltotetraose chains that are attached by 1,6-alpha-linkage to the limit dextrin main chain, generating a debranched limit dextrin. In Yersinia pseudotuberculosis serotype O:1b (strain IP 31758), this protein is Glycogen debranching enzyme.